The chain runs to 61 residues: Short neurotoxin 1 (61 aa).

4 cysteine pairs are disulfide-bonded: cysteine 3/cysteine 23, cysteine 17/cysteine 40, cysteine 42/cysteine 53, and cysteine 54/cysteine 59.

Belongs to the three-finger toxin family. Short-chain subfamily. Type I alpha-neurotoxin sub-subfamily. As to expression, expressed by the venom gland.

The protein resides in the secreted. In terms of biological role, binds with high affinity to muscular nicotinic acetylcholine receptors (nAChRs) (tested on Torpedo marmorata AChR, Kd=0.07 nM) and with low affinity to neuronal alpha-7/CHRNA7 nAChRs (tested on chimeric receptor, Kd=3 uM) and inhibit acetylcholine from binding to the receptor, thereby impairing neuromuscular transmission. Produces peripheral paralysis by blocking neuromuscular transmission at the postsynaptic site. This is Short neurotoxin 1 from Naja pallida (Red spitting cobra).